We begin with the raw amino-acid sequence, 247 residues long: 2,3-bisphosphoglycerate-dependent phosphoglycerate mutase (247 aa).

Residues 9-16 (RHGESEWN), 22-23 (TG), arginine 61, 88-91 (ERHY), lysine 99, 115-116 (RR), and 183-184 (GN) each bind substrate. Histidine 10 functions as the Tele-phosphohistidine intermediate in the catalytic mechanism. The Proton donor/acceptor role is filled by glutamate 88.

This sequence belongs to the phosphoglycerate mutase family. BPG-dependent PGAM subfamily.

It catalyses the reaction (2R)-2-phosphoglycerate = (2R)-3-phosphoglycerate. Its pathway is carbohydrate degradation; glycolysis; pyruvate from D-glyceraldehyde 3-phosphate: step 3/5. Functionally, catalyzes the interconversion of 2-phosphoglycerate and 3-phosphoglycerate. This is 2,3-bisphosphoglycerate-dependent phosphoglycerate mutase from Nocardioides sp. (strain ATCC BAA-499 / JS614).